The primary structure comprises 138 residues: Phospholipase A2 homolog crotoxin acid subunit CA (138 aa).

An N-terminal signal peptide occupies residues 1 to 37 (MRALWIVAVLLVGVEGSLVEFETLMMKIAGRSGISYY). 8 disulfide bridges follow: cysteine 42/cysteine 131, cysteine 44/cysteine 60, cysteine 59/cysteine 111, cysteine 65/cysteine 138, cysteine 66/cysteine 104, cysteine 73/cysteine 97, cysteine 91/cysteine 102, and cysteine 131/cysteine 138. The propeptide occupies 79 to 82 (VYTY). Position 84 is a pyrrolidone carboxylic acid (glutamine 84). Residues 119 to 124 (YDYKYL) constitute a propeptide that is removed on maturation. Glutamine 125 is subject to Pyrrolidone carboxylic acid.

The protein belongs to the phospholipase A2 family. Group II subfamily. D49 sub-subfamily. As to quaternary structure, heterodimer of one of the acidic (CA1, CA2, CA3 or CA4) and one of the basic (CBa1, CBa2, CBb, CBc or CBd) subunits; non-covalently linked. The acidic subunit is non-toxic, without enzymatic activity and comprises 3 peptides that are cross-linked by 5 disulfide bridges. The basic subunit is toxic, has phospholipase A2 activity and is composed of a single chain. Multiple variants of each subunit give different crotoxin complexes that can be subdivided into 2 classes: (1) those of high toxicity, low PLA2 activity (CBb, CBc and CBd linked with high affinity to any CA) and high stability (K(d)=4.5 nM) and (2) those of moderate toxicity, high PLA2 activity (CBa2 linked with low affinity to any CA) and low stability (K(d)=25 nM). As to expression, expressed by the venom gland.

Its subcellular location is the secreted. Functionally, CAalpha-CAbeta-CAgamma: The acidic subunit of crotoxin (CA) is a heterotrimer of three disulfide-linked chains generated by post-translational maturation of a PLA2-like precursor. CA has no PLA2 activity and is not neurotoxic by itself, but plays several important functions in the crotoxin complex by increasing the lethal potency of the uncomplexed CB subunit. It acts by physically occluding the hydrophobic interfacial binding surface (IBS) of CB. This effect decreases the adsorption of CB to phospholipid membranes, targeting the crotoxin complex to reach the specific presynaptic receptor (R48) at the neuromuscular junction. It also prevents the formation of the reactive CB dimer. Moreover, the CA subunit inhibits the catalytic activity by partially masking the catalytic site of CB and inhibits its anticoagulant activity. Heterodimer CA-CB: Crotoxin is a potent presynaptic neurotoxin that possesses phospholipase A2 (PLA2) activity and exerts a lethal action by blocking neuromuscular transmission. It consists of a non-covalent association of a basic and weakly toxic PLA2 subunit (CBa2, CBb, CBc, or CBd), with a small acidic, non-enzymatic and non-toxic subunit (CA1, CA2, CA3 or CA4). The complex acts by binding to a specific 48-kDa protein (R48/CAPT) receptor located on presynaptic membranes, forming a transient ternary complex CA-CB-R48, followed by dissociation of the CA-CB complex and release of the CA subunit. At equilibrium, only the CB subunits remain associated with the specific crotoxin receptor. In addition to neurotoxicity, crotoxin has been found to exert myotoxicity, nephrotoxicity, and cardiovascular toxicity. Moreover, anti-inflammatory, immunomodulatory, anti-tumor and analgesic effects of crotoxin have also been reported. In terms of biological role, found in the venom as a monomer and stabilized by one disulfide bond (Cys-131 and Cys-138). This peptide induces potent antinociceptive effects in acute and chronic pain models. This effect is mediated by the release of peripheral dynorphin A, an endogenous agonist of kappa-opioid receptors, and this release is dependent on cannabinoid receptor CB2 activation. This chain is Phospholipase A2 homolog crotoxin acid subunit CA, found in Crotalus durissus terrificus (South American rattlesnake).